A 395-amino-acid polypeptide reads, in one-letter code: GA-binding protein subunit beta-1 (395 aa).

Serine 2 is subject to N-acetylserine. ANK repeat units follow at residues 5 to 34 and 37 to 66; these read DLGK…PFTT and LGTS…SRDA. Lysine 69 carries the N6-acetyllysine modification. ANK repeat units follow at residues 70-99, 103-132, and 136-166; these read VDRT…DVNA, LKMT…DVHT, and FCKT…QINT. Residues 258-327 form a transcription activation and HCFC1 interaction region; that stretch reads DGAIQQVVSS…ETVISEEPPA (70 aa). An N6-acetyllysine mark is found at lysine 352 and lysine 381.

Heterotetramer of two alpha and two beta subunits. Interacts with HCFC1, causing repression of transcriptional activity. Acetylated by EP300/p300. Deacetylated by SIRT7, promoting heterotetramerization and activity.

Its subcellular location is the nucleus. Its function is as follows. Transcription factor capable of interacting with purine rich repeats (GA repeats). Acts as a master regulator of nuclear-encoded mitochondrial genes. In terms of biological role, (Microbial infection) Necessary for the expression of the Adenovirus E4 gene. This Homo sapiens (Human) protein is GA-binding protein subunit beta-1 (GABPB1).